Consider the following 335-residue polypeptide: Adenosine deaminase (335 aa).

Zn(2+) contacts are provided by His-12 and His-14. Substrate-binding residues include His-14 and Asp-16. His-197 contributes to the Zn(2+) binding site. The Proton donor role is filled by Glu-200. Asp-278 lines the Zn(2+) pocket.

It belongs to the metallo-dependent hydrolases superfamily. Adenosine and AMP deaminases family. Adenosine deaminase subfamily. Zn(2+) is required as a cofactor.

The catalysed reaction is adenosine + H2O + H(+) = inosine + NH4(+). It carries out the reaction 2'-deoxyadenosine + H2O + H(+) = 2'-deoxyinosine + NH4(+). In terms of biological role, catalyzes the hydrolytic deamination of adenosine and 2-deoxyadenosine. The chain is Adenosine deaminase from Clostridium botulinum (strain Loch Maree / Type A3).